A 183-amino-acid chain; its full sequence is Peptide deformylase (183 aa).

Residues Cys110 and His153 each coordinate Fe cation. The active site involves Glu154. His157 contributes to the Fe cation binding site.

It belongs to the polypeptide deformylase family. Fe(2+) is required as a cofactor.

The enzyme catalyses N-terminal N-formyl-L-methionyl-[peptide] + H2O = N-terminal L-methionyl-[peptide] + formate. Its function is as follows. Removes the formyl group from the N-terminal Met of newly synthesized proteins. Requires at least a dipeptide for an efficient rate of reaction. N-terminal L-methionine is a prerequisite for activity but the enzyme has broad specificity at other positions. This chain is Peptide deformylase, found in Listeria welshimeri serovar 6b (strain ATCC 35897 / DSM 20650 / CCUG 15529 / CIP 8149 / NCTC 11857 / SLCC 5334 / V8).